The primary structure comprises 391 residues: NAD(P)H-quinone oxidoreductase subunit H, chloroplastic (391 aa).

It belongs to the complex I 49 kDa subunit family. In terms of assembly, NDH is composed of at least 16 different subunits, 5 of which are encoded in the nucleus.

It localises to the plastid. Its subcellular location is the chloroplast thylakoid membrane. It carries out the reaction a plastoquinone + NADH + (n+1) H(+)(in) = a plastoquinol + NAD(+) + n H(+)(out). The enzyme catalyses a plastoquinone + NADPH + (n+1) H(+)(in) = a plastoquinol + NADP(+) + n H(+)(out). Functionally, NDH shuttles electrons from NAD(P)H:plastoquinone, via FMN and iron-sulfur (Fe-S) centers, to quinones in the photosynthetic chain and possibly in a chloroplast respiratory chain. The immediate electron acceptor for the enzyme in this species is believed to be plastoquinone. Couples the redox reaction to proton translocation, and thus conserves the redox energy in a proton gradient. The sequence is that of NAD(P)H-quinone oxidoreductase subunit H, chloroplastic from Mesostigma viride (Green alga).